The primary structure comprises 357 residues: tRNA-specific 2-thiouridylase MnmA (357 aa).

Residues 10–17 (GISGGVDS) and I36 each bind ATP. C98 functions as the Nucleophile in the catalytic mechanism. Cysteines 98 and 194 form a disulfide. G122 provides a ligand contact to ATP. The interval 144-146 (KDQ) is interaction with tRNA. The Cysteine persulfide intermediate role is filled by C194. The segment at 303–304 (RY) is interaction with tRNA.

Belongs to the MnmA/TRMU family.

It localises to the cytoplasm. It carries out the reaction S-sulfanyl-L-cysteinyl-[protein] + uridine(34) in tRNA + AH2 + ATP = 2-thiouridine(34) in tRNA + L-cysteinyl-[protein] + A + AMP + diphosphate + H(+). Its function is as follows. Catalyzes the 2-thiolation of uridine at the wobble position (U34) of tRNA, leading to the formation of s(2)U34. In Chlorobium phaeovibrioides (strain DSM 265 / 1930) (Prosthecochloris vibrioformis (strain DSM 265)), this protein is tRNA-specific 2-thiouridylase MnmA.